The sequence spans 452 residues: Na(+)/H(+) antiporter NhaA (452 aa).

Helical transmembrane passes span 27-47 (FLHI…TALI), 78-98 (LHFW…GMEI), 114-134 (ILPI…YLSF), 141-161 (IYGW…ILAL), 172-192 (IILL…IAFF), 201-221 (GLAI…ISFA), 222-242 (SAWL…VTGI), 316-336 (PWVA…VSFA), 346-366 (FLIV…GILA), 388-408 (ILLI…VSML), and 421-441 (IGVL…GLIY).

It belongs to the NhaA Na(+)/H(+) (TC 2.A.33) antiporter family.

The protein localises to the cell inner membrane. It carries out the reaction Na(+)(in) + 2 H(+)(out) = Na(+)(out) + 2 H(+)(in). Its function is as follows. Na(+)/H(+) antiporter that extrudes sodium in exchange for external protons. This is Na(+)/H(+) antiporter NhaA from Bartonella bacilliformis (strain ATCC 35685 / KC583 / Herrer 020/F12,63).